Consider the following 514-residue polypeptide: Putative exoglucanase type C (514 aa).

Positions 1 to 17 (MYRIVATASALIAAARA) are cleaved as a signal peptide. The segment at 18-439 (QQVCSLNTET…RDVPNSKVSF (422 aa)) is catalytic. E229 (nucleophile) is an active-site residue. Residue E234 is the Proton donor of the active site. N-linked (GlcNAc...) asparagine glycosylation is present at N287. Residues 408–424 (STKVGSQRGSCATTSGK) show a composition bias toward polar residues. 2 disordered regions span residues 408-433 (STKV…RDVP) and 448-485 (GSTY…QWGQ). The linker stretch occupies residues 440–482 (SNIKFGPIGSTYKSDGTTPNPPASSSTTGSSTPTNPPAGSVDQ). Over residues 462–479 (ASSSTTGSSTPTNPPAGS) the composition is skewed to low complexity. One can recognise a CBM1 domain in the interval 478–514 (GSVDQWGQCGGQNYSGPTTCKSPFTCKKINDFYSQCQ). 2 disulfide bridges follow: C486–C503 and C497–C513. N490 carries an N-linked (GlcNAc...) asparagine glycan.

The protein belongs to the glycosyl hydrolase 7 (cellulase C) family.

It carries out the reaction Hydrolysis of (1-&gt;4)-beta-D-glucosidic linkages in cellulose and cellotetraose, releasing cellobiose from the non-reducing ends of the chains.. The sequence is that of Putative exoglucanase type C from Fusarium oxysporum (Fusarium vascular wilt).